The sequence spans 522 residues: Proactivator polypeptide-like 1 (522 aa).

An N-terminal signal peptide occupies residues 1 to 17 (MLCALILWSGLLGAARA). A propeptide spanning residues 18 to 59 (SPISVPRECAKGSEVWCQDLQAAAKCRAVRHCQSAVWNKPTV) is cleaved from the precursor. The Saposin A-type 1 domain maps to 19 to 59 (PISVPRECAKGSEVWCQDLQAAAKCRAVRHCQSAVWNKPTV). 4 consecutive Saposin B-type domains span residues 60 to 144 (KSLP…EPLQ), 183 to 261 (EGAV…ERES), 291 to 371 (LGLT…GSKR), and 393 to 474 (QGSF…HGPK). Disulfide bonds link C64/C140, C67/C134, and C95/C107. Residues 146-183 (HLAETTSERPLTQEDANEVMAPFLSNGALSFHPSQMPE) constitute a propeptide that is removed on maturation. Disulfide bonds link C187–C257, C190–C251, and C216–C227. The N-linked (GlcNAc...) asparagine glycan is linked to N204. Positions 261-290 (SAHWLTRVAAVDGVPSLEMEMPRTNELQMQ) are excised as a propeptide. Cystine bridges form between C295/C367, C298/C361, and C326/C337. N312 is a glycosylation site (N-linked (GlcNAc...) (high mannose) asparagine). Residues 371 to 392 (RRARSISRAVATTPSLPVDEEN) constitute a propeptide that is removed on maturation. Intrachain disulfides connect C397–C470, C400–C464, and C428–C439. Residues 475–522 (TPLLGTDQCVMGPSFWCKSPEAAEMCNALEHCQRLVWKKPVSKINEQP) constitute a propeptide that is removed on maturation. In terms of domain architecture, Saposin A-type 2 spans 476-516 (PLLGTDQCVMGPSFWCKSPEAAEMCNALEHCQRLVWKKPVS).

The protein localises to the secreted. Its function is as follows. May activate the lysosomal degradation of sphingolipids. This Mus musculus (Mouse) protein is Proactivator polypeptide-like 1 (Psapl1).